Here is a 723-residue protein sequence, read N- to C-terminus: Malonamoyl-CoA synthetase vrtB (723 aa).

Belongs to the ATP-dependent AMP-binding enzyme family.

It participates in secondary metabolite biosynthesis; terpenoid biosynthesis. Malonamoyl-CoA synthetase; part of the gene cluster that mediates the biosynthesis of viridicatumtoxin, a tetracycline-like fungal meroterpenoid with a unique, fused spirobicyclic ring system. The first step of the pathway is the production of the malonamoyl-CoA starter unit for the polyketide synthase vrtA. The aldolase vrtJ may be involved in the synthesis of the malonamate substrate for malonamoyl-CoA synthetase vrtB. The polyketide synthase vrtA then may utilize the malonamoyl-CoA starter unit, followed by sequential condensation of eight malonyl-CoA units to form the polyketide backbone. The cyclization of the last ring could be mediated by the lactamase-like protein vrtG. The proposed post-PKS tailoring steps are a hydroxylation at C5 catalyzed the cytochrome P450 monooxygenase vrtE, a hydroxylation at C12a catalyzed by VrtH and/or VrtI, and an O-methylation by the O-methyltransferase vrtF. VrtC is then proposed to catalyze the transfer of a geranyl group synthesized by vrtD to the aromatic C ring of the tetracyclic polyketide intermediate of viridicatumtoxin to yield previridicatumtoxin. Finally, the cytochrome P450 monooxygenase vrtK catalyzes the spirocyclization of the geranyl moiety of previridicatumtoxin to afford viridicatumtoxin. In Penicillium aethiopicum, this protein is Malonamoyl-CoA synthetase vrtB.